We begin with the raw amino-acid sequence, 267 residues long: NAD kinase 2 (267 aa).

D52 (proton acceptor) is an active-site residue. Residues 52–53 (DG), 124–125 (NE), R151, D153, 164–169 (TAYNKS), and A188 contribute to the NAD(+) site.

This sequence belongs to the NAD kinase family. The cofactor is a divalent metal cation.

The protein localises to the cytoplasm. It carries out the reaction NAD(+) + ATP = ADP + NADP(+) + H(+). In terms of biological role, involved in the regulation of the intracellular balance of NAD and NADP, and is a key enzyme in the biosynthesis of NADP. Catalyzes specifically the phosphorylation on 2'-hydroxyl of the adenosine moiety of NAD to yield NADP. The polypeptide is NAD kinase 2 (Bacillus subtilis (strain 168)).